The sequence spans 181 residues: Large ribosomal subunit protein uL16 (181 aa).

Belongs to the universal ribosomal protein uL16 family.

The chain is Large ribosomal subunit protein uL16 from Pyrococcus abyssi (strain GE5 / Orsay).